The primary structure comprises 155 residues: MVKGQGNVVAQNKKAHHDYTIVETIEAGIVLTGTEIKSVRAARITLKDGYAQIKNGEAWLINVHITPYDQGNIWNQDPDRTRKLLLKKREIEKISNELKGTGMTLVPLKVYLKDGFAKVLLGLAKGKHDYDKRESIKRREQNRDIARQLKNYNSR.

The protein belongs to the SmpB family.

Its subcellular location is the cytoplasm. Required for rescue of stalled ribosomes mediated by trans-translation. Binds to transfer-messenger RNA (tmRNA), required for stable association of tmRNA with ribosomes. tmRNA and SmpB together mimic tRNA shape, replacing the anticodon stem-loop with SmpB. tmRNA is encoded by the ssrA gene; the 2 termini fold to resemble tRNA(Ala) and it encodes a 'tag peptide', a short internal open reading frame. During trans-translation Ala-aminoacylated tmRNA acts like a tRNA, entering the A-site of stalled ribosomes, displacing the stalled mRNA. The ribosome then switches to translate the ORF on the tmRNA; the nascent peptide is terminated with the 'tag peptide' encoded by the tmRNA and targeted for degradation. The ribosome is freed to recommence translation, which seems to be the essential function of trans-translation. The chain is SsrA-binding protein from Streptococcus agalactiae serotype Ia (strain ATCC 27591 / A909 / CDC SS700).